The chain runs to 119 residues: MSDTSEEIPNFEEMFASRFTKDDKEYQEYLKRPPESPPIVEEWNSRAGGNQRNRGNWLQDNRQFRGRDNRRGWPSDNRSNQWHGRSWGNNNYPQQRPEPYYQQQYTQYGHNQRPPYGYY.

The segment at 1–55 (MSDTSEEIPNFEEMFASRFTKDDKEYQEYLKRPPESPPIVEEWNSRAGGNQRNRG) is interaction with RNMT. The interval 30 to 119 (LKRPPESPPI…HNQRPPYGYY (90 aa)) is disordered. Ser36 is modified (phosphoserine). The short motif at 36 to 42 (SPPIVEE) is the RNMT-activating domain element. Polar residues predominate over residues 47-61 (AGGNQRNRGNWLQDN). The interval 56 to 119 (NWLQDNRQFR…HNQRPPYGYY (64 aa)) is RNA-binding. Residues 62-73 (RQFRGRDNRRGW) show a composition bias toward basic and acidic residues. Arg85 is modified (omega-N-methylarginine). Ser86 is modified (phosphoserine). A compositionally biased stretch (low complexity) spans 89 to 112 (NNNYPQQRPEPYYQQQYTQYGHNQ).

It belongs to the RAM family. As to quaternary structure, interacts with RNMT; this interaction enhances mRNA binding and cap methyltransferase activity.

It is found in the nucleus. Functionally, regulatory subunit of the mRNA-capping methyltransferase RNMT:RAMAC complex that methylates the N7 position of the added guanosine to the 5'-cap structure of mRNAs. Promotes the recruitment of the methyl donor, S-adenosyl-L-methionine, to RNMT. Regulates RNMT expression by a post-transcriptional stabilizing mechanism. Binds RNA. In Mus musculus (Mouse), this protein is RNA guanine-N7 methyltransferase activating subunit (Ramac).